The primary structure comprises 142 residues: uncharacterized protein (142 aa).

Residues 1–14 show a composition bias toward basic residues; it reads MKNVSPRRNKHYKS. Residues 1–40 form a disordered region; it reads MKNVSPRRNKHYKSYKPQVPLKKPVLLPQHPPYRNRRKKK. The span at 16–28 shows a compositional bias: low complexity; sequence KPQVPLKKPVLLP.

This is an uncharacterized protein from Aquifex aeolicus (strain VF5).